A 324-amino-acid polypeptide reads, in one-letter code: Probable pectinesterase A (324 aa).

The N-terminal stretch at Met-1–Ala-19 is a signal peptide. Residue Gln-142 participates in substrate binding. Asp-165 acts as the Proton donor in catalysis. The active-site Nucleophile is Asp-186. Positions 246 and 248 each coordinate substrate. A glycan (N-linked (GlcNAc...) asparagine) is linked at Asn-285.

Belongs to the pectinesterase family.

The protein localises to the secreted. It catalyses the reaction [(1-&gt;4)-alpha-D-galacturonosyl methyl ester](n) + n H2O = [(1-&gt;4)-alpha-D-galacturonosyl](n) + n methanol + n H(+). It functions in the pathway glycan metabolism; pectin degradation; 2-dehydro-3-deoxy-D-gluconate from pectin: step 1/5. In terms of biological role, involved in maceration and soft-rotting of plant tissue. The sequence is that of Probable pectinesterase A (pmeA) from Aspergillus flavus (strain ATCC 200026 / FGSC A1120 / IAM 13836 / NRRL 3357 / JCM 12722 / SRRC 167).